A 427-amino-acid polypeptide reads, in one-letter code: 3-phosphoshikimate 1-carboxyvinyltransferase (427 aa).

K22, S23, and R27 together coordinate 3-phosphoshikimate. K22 contributes to the phosphoenolpyruvate binding site. Phosphoenolpyruvate contacts are provided by G96 and R124. 3-phosphoshikimate is bound by residues S169, S170, Q171, S197, D313, N336, and K340. Q171 contacts phosphoenolpyruvate. The active-site Proton acceptor is the D313. 3 residues coordinate phosphoenolpyruvate: R344, R386, and K411.

This sequence belongs to the EPSP synthase family. In terms of assembly, monomer.

It localises to the cytoplasm. The catalysed reaction is 3-phosphoshikimate + phosphoenolpyruvate = 5-O-(1-carboxyvinyl)-3-phosphoshikimate + phosphate. Its pathway is metabolic intermediate biosynthesis; chorismate biosynthesis; chorismate from D-erythrose 4-phosphate and phosphoenolpyruvate: step 6/7. Catalyzes the transfer of the enolpyruvyl moiety of phosphoenolpyruvate (PEP) to the 5-hydroxyl of shikimate-3-phosphate (S3P) to produce enolpyruvyl shikimate-3-phosphate and inorganic phosphate. This chain is 3-phosphoshikimate 1-carboxyvinyltransferase, found in Shigella sonnei.